The following is a 59-amino-acid chain: MRQLKGKPKKETSKDKKERKQAMQEARQQITTVVLPTLAVVVLLIVVFVYVATRPAVTE.

Residues 1-23 are disordered; the sequence is MRQLKGKPKKETSKDKKERKQAM. The segment covering 9–22 has biased composition (basic and acidic residues); sequence KKETSKDKKERKQA. Residues 9-31 adopt a coiled-coil conformation; the sequence is KKETSKDKKERKQAMQEARQQIT. Residues 32-52 form a helical membrane-spanning segment; that stretch reads TVVLPTLAVVVLLIVVFVYVA.

This sequence belongs to the SMCO4 family.

It localises to the membrane. The protein is Single-pass membrane and coiled-coil domain-containing protein 4 (Smco4) of Mus musculus (Mouse).